The primary structure comprises 81 residues: Photosystem I iron-sulfur center (81 aa).

4Fe-4S ferredoxin-type domains lie at Ser-2–Trp-31 and Ile-39–Tyr-68. [4Fe-4S] cluster-binding residues include Cys-11, Cys-14, Cys-17, Cys-21, Cys-48, Cys-51, Cys-54, and Cys-58.

In terms of assembly, the eukaryotic PSI reaction center is composed of at least 11 subunits. [4Fe-4S] cluster is required as a cofactor.

The protein resides in the plastid. It localises to the chloroplast thylakoid membrane. The catalysed reaction is reduced [plastocyanin] + hnu + oxidized [2Fe-2S]-[ferredoxin] = oxidized [plastocyanin] + reduced [2Fe-2S]-[ferredoxin]. Functionally, apoprotein for the two 4Fe-4S centers FA and FB of photosystem I (PSI); essential for photochemical activity. FB is the terminal electron acceptor of PSI, donating electrons to ferredoxin. The C-terminus interacts with PsaA/B/D and helps assemble the protein into the PSI complex. Required for binding of PsaD and PsaE to PSI. PSI is a plastocyanin/cytochrome c6-ferredoxin oxidoreductase, converting photonic excitation into a charge separation, which transfers an electron from the donor P700 chlorophyll pair to the spectroscopically characterized acceptors A0, A1, FX, FA and FB in turn. This Nephroselmis olivacea (Green alga) protein is Photosystem I iron-sulfur center.